An 821-amino-acid chain; its full sequence is Ribonuclease R (821 aa).

Residues 267 to 593 (RVDLRALPLV…LLHRAIKYLI (327 aa)) form the RNB domain. The S1 motif domain maps to 652–733 (GEELEGVVAN…DDRQIDFELV (82 aa)). The segment at 739–821 (LRGQGKTAKK…KSGKVRDKTK (83 aa)) is disordered. 2 stretches are compositionally biased toward basic and acidic residues: residues 748 to 764 (KRAD…KEAA) and 774 to 794 (TKSE…EGRS). A compositionally biased stretch (basic residues) spans 795-814 (KPKKTKAPKKRKDQARKKSG).

It belongs to the RNR ribonuclease family. RNase R subfamily.

The protein resides in the cytoplasm. It catalyses the reaction Exonucleolytic cleavage in the 3'- to 5'-direction to yield nucleoside 5'-phosphates.. 3'-5' exoribonuclease that releases 5'-nucleoside monophosphates and is involved in maturation of structured RNAs. This is Ribonuclease R from Vibrio cholerae serotype O1 (strain ATCC 39315 / El Tor Inaba N16961).